A 503-amino-acid chain; its full sequence is D-alanine--D-alanyl carrier protein ligase (503 aa).

An ATP-binding site is contributed by 151-152; sequence TS. Residue Asp-196 participates in D-alanine binding. Position 291–296 (291–296) interacts with ATP; it reads NTYGPT. Val-300 lines the D-alanine pocket. 2 residues coordinate ATP: Asp-382 and Lys-491. Residue Lys-491 participates in D-alanine binding.

Belongs to the ATP-dependent AMP-binding enzyme family. DltA subfamily.

The protein localises to the cytoplasm. It catalyses the reaction holo-[D-alanyl-carrier protein] + D-alanine + ATP = D-alanyl-[D-alanyl-carrier protein] + AMP + diphosphate. The protein operates within cell wall biogenesis; lipoteichoic acid biosynthesis. In terms of biological role, catalyzes the first step in the D-alanylation of lipoteichoic acid (LTA), the activation of D-alanine and its transfer onto the D-alanyl carrier protein (Dcp) DltC. In an ATP-dependent two-step reaction, forms a high energy D-alanyl-AMP intermediate, followed by transfer of the D-alanyl residue as a thiol ester to the phosphopantheinyl prosthetic group of the Dcp. D-alanylation of LTA plays an important role in modulating the properties of the cell wall in Gram-positive bacteria, influencing the net charge of the cell wall. This chain is D-alanine--D-alanyl carrier protein ligase, found in Bacillus velezensis (strain DSM 23117 / BGSC 10A6 / LMG 26770 / FZB42) (Bacillus amyloliquefaciens subsp. plantarum).